Consider the following 809-residue polypeptide: Leucine-rich repeat and calponin homology domain-containing protein (809 aa).

The interval G27 to S53 is disordered. Residues S34–H44 are compositionally biased toward gly residues. LRR repeat units lie at residues E72–Y96, L98–F121, A122–L144, S145–P168, Q170–L189, Q191–L213, R214–L236, L238–M258, and T260–G282. 3 disordered regions span residues T295–V373, L423–D442, and K490–V550. Over residues H319–N336 the composition is skewed to polar residues. Positions G351–S368 are enriched in basic and acidic residues. The span at N518–I532 shows a compositional bias: polar residues. The Calponin-homology (CH) domain occupies Q662 to G776. Residues G783–A809 form a disordered region. The span at A788–A809 shows a compositional bias: polar residues.

Its subcellular location is the cytoplasm. It is found in the cytoskeleton. The protein localises to the cell cortex. It localises to the cleavage furrow. Its function is as follows. May play a role in the stabilization of the actin-rich cell cortex during cell division. In Drosophila melanogaster (Fruit fly), this protein is Leucine-rich repeat and calponin homology domain-containing protein.